The following is a 1390-amino-acid chain: ABC transporter G family member 43 (1390 aa).

The disordered stretch occupies residues 1 to 22; the sequence is MTMPQTDGVEFASRNNLENGDG. The ABC transporter 1 domain occupies 137–411; that stretch reads SKLSRFTFSK…FEDCGFKCPQ (275 aa). 171–178 provides a ligand contact to ATP; the sequence is GPPGCGKT. The region spanning 489–701 is the ABC transmembrane type-2 1 domain; it reads DMFKACSRRE…AEIGLTSNEF (213 aa). The next 6 membrane-spanning stretches (helical) occupy residues 507 to 527, 541 to 561, 594 to 614, 626 to 646, 651 to 671, and 737 to 757; these read FVYV…MTVY, YLLG…LPEL, IPIS…VIGY, LILF…GAVF, VATT…GFIV, and FGAL…ALTF. The ABC transporter 2 domain occupies 798-1043; sequence FTFQDVQYFI…VIEYFMSIPG (246 aa). 835-842 provides a ligand contact to ATP; sequence GVSGAGKT. An ABC transmembrane type-2 2 domain is found at 1115–1329; the sequence is EQFKACLWKQ…VLNGLLTSQY (215 aa). The next 7 membrane-spanning stretches (helical) occupy residues 1134-1154, 1173-1193, 1218-1238, 1253-1273, 1279-1299, 1307-1327, and 1362-1382; these read YNLT…ILFL, MFTV…FCVA, VLVE…IVYP, FYSI…LVVV, IAFT…GYVM, WWIW…LLTS, and LVAV…AFFI.

The protein belongs to the ABC transporter superfamily. ABCG family. PDR (TC 3.A.1.205) subfamily.

The protein resides in the membrane. Functionally, may be a general defense protein. This is ABC transporter G family member 43 (ABCG43) from Arabidopsis thaliana (Mouse-ear cress).